A 256-amino-acid polypeptide reads, in one-letter code: Enolase-phosphatase E1 (256 aa).

The Mg(2+) site is built by Asp14 and Glu16. Substrate contacts are provided by residues 142–143 (SS) and Lys176. Asp201 is a Mg(2+) binding site.

Belongs to the HAD-like hydrolase superfamily. MasA/MtnC family. Monomer. Requires Mg(2+) as cofactor.

The protein localises to the cytoplasm. The protein resides in the nucleus. It carries out the reaction 5-methylsulfanyl-2,3-dioxopentyl phosphate + H2O = 1,2-dihydroxy-5-(methylsulfanyl)pent-1-en-3-one + phosphate. It participates in amino-acid biosynthesis; L-methionine biosynthesis via salvage pathway; L-methionine from S-methyl-5-thio-alpha-D-ribose 1-phosphate: step 3/6. Its pathway is amino-acid biosynthesis; L-methionine biosynthesis via salvage pathway; L-methionine from S-methyl-5-thio-alpha-D-ribose 1-phosphate: step 4/6. Bifunctional enzyme that catalyzes the enolization of 2,3-diketo-5-methylthiopentyl-1-phosphate (DK-MTP-1-P) into the intermediate 2-hydroxy-3-keto-5-methylthiopentenyl-1-phosphate (HK-MTPenyl-1-P), which is then dephosphorylated to form the acireductone 1,2-dihydroxy-3-keto-5-methylthiopentene (DHK-MTPene). The polypeptide is Enolase-phosphatase E1 (Drosophila melanogaster (Fruit fly)).